A 24-amino-acid polypeptide reads, in one-letter code: Brevinin-1JDb (24 aa).

A disulfide bond links Cys-18 and Cys-24.

As to expression, expressed by the skin glands.

It localises to the secreted. Has antibacterial activity against E.coli and S.aureus strains. Has antifungal activity against C.albicans. Has hemolytic activity against rabbit erythrocytes. The protein is Brevinin-1JDb of Odorrana jingdongensis (Jingdong frog).